The sequence spans 819 residues: Ent-beyerene synthase KSL2, chloroplastic (819 aa).

A chloroplast-targeting transit peptide spans 1-58; that stretch reads MLPCLFPAYGSVVACKPSAIDRSPFGLLSQPKQTNRTLIRRPKVTKAFMAIEAMRHCS. Positions 58–76 are enriched in low complexity; the sequence is SSSSSSEEGGAAATTAARS. Positions 58–77 are disordered; it reads SSSSSSEEGGAAATTAARSA. Mg(2+) contacts are provided by Asp-567, Asp-571, Asn-711, Ser-715, and Glu-719. Positions 567 to 571 match the DDXXD motif motif; it reads DDFFD.

Belongs to the terpene synthase family. It depends on Mg(2+) as a cofactor. In terms of tissue distribution, expressed in roots. Highly expressed in stems, flowers and panicle.

Its subcellular location is the plastid. The protein resides in the chloroplast. The enzyme catalyses ent-copalyl diphosphate = ent-beyerene + diphosphate. It catalyses the reaction ent-copalyl diphosphate = ent-kaur-16-ene + diphosphate. It participates in secondary metabolite biosynthesis; terpenoid biosynthesis. Functionally, diterpene cyclase involved in jasmonic acid-dependent defense mechanisms in roots by mediating the biosynthesis of labdane-related diterpenoids (LRDs) natural products such as ent-beyerene, an antimicrobial compound. Catalyzes the cyclization of ent-CDP into ent-beyerene as a major and ent-kaurene as a minor product. May be involved in the catalysis of an early step of the gibberellin (GA) biosynthesis pathway. This is Ent-beyerene synthase KSL2, chloroplastic from Oryza sativa subsp. japonica (Rice).